A 651-amino-acid chain; its full sequence is Acetyl-coenzyme A synthetase (651 aa).

Residues 193-196 (RAGR), T313, and N337 contribute to the CoA site. ATP contacts are provided by residues 389-391 (GEP), 413-418 (DTWWQT), D502, and R517. S525 serves as a coordination point for CoA. R528 is an ATP binding site. Mg(2+) contacts are provided by V539, H541, and V544. Position 586 (R586) interacts with CoA. At K611 the chain carries N6-acetyllysine.

The protein belongs to the ATP-dependent AMP-binding enzyme family. The cofactor is Mg(2+). Acetylated. Deacetylation by the SIR2-homolog deacetylase activates the enzyme.

The enzyme catalyses acetate + ATP + CoA = acetyl-CoA + AMP + diphosphate. Functionally, catalyzes the conversion of acetate into acetyl-CoA (AcCoA), an essential intermediate at the junction of anabolic and catabolic pathways. AcsA undergoes a two-step reaction. In the first half reaction, AcsA combines acetate with ATP to form acetyl-adenylate (AcAMP) intermediate. In the second half reaction, it can then transfer the acetyl group from AcAMP to the sulfhydryl group of CoA, forming the product AcCoA. This Shewanella denitrificans (strain OS217 / ATCC BAA-1090 / DSM 15013) protein is Acetyl-coenzyme A synthetase.